Reading from the N-terminus, the 363-residue chain is Mitogen-activated protein kinase 12 (363 aa).

Residues 25–309 (YKDLKQVGTG…AAEALAFPFF (285 aa)) form the Protein kinase domain. Residues 31–39 (VGTGAYGTV) and Lys-54 contribute to the ATP site. The Proton acceptor role is filled by Asp-151. Thr-181 is modified (phosphothreonine). The TXY signature appears at 181–183 (TGY). A Phosphotyrosine modification is found at Tyr-183.

It belongs to the protein kinase superfamily. CMGC Ser/Thr protein kinase family. MAP kinase subfamily. It depends on Mg(2+) as a cofactor. Post-translationally, dually phosphorylated on Thr-181 and Tyr-183, which activates the enzyme.

It localises to the cytoplasm. It carries out the reaction L-seryl-[protein] + ATP = O-phospho-L-seryl-[protein] + ADP + H(+). It catalyses the reaction L-threonyl-[protein] + ATP = O-phospho-L-threonyl-[protein] + ADP + H(+). Its activity is regulated as follows. Activated by threonine and tyrosine phosphorylation. Its function is as follows. Serine/threonine kinase which acts as an essential component of the MAP kinase signal transduction pathway. MAPK12 is one of the four p38 MAPKs which play an important role in the cascades of cellular responses evoked by extracellular stimuli such as pro-inflammatory cytokines or physical stress leading to direct activation of transcription factors. Accordingly, p38 MAPKs phosphorylate a broad range of proteins and it has been estimated that they may have approximately 200 to 300 substrates each. Some of the targets are downstream kinases such as MAPKAPK2, which are activated through phosphorylation and further phosphorylate additional targets. In Danio rerio (Zebrafish), this protein is Mitogen-activated protein kinase 12 (mapk12).